Here is a 491-residue protein sequence, read N- to C-terminus: Probable glycine dehydrogenase (decarboxylating) subunit 2 (491 aa).

An N6-(pyridoxal phosphate)lysine modification is found at lysine 273.

It belongs to the GcvP family. C-terminal subunit subfamily. As to quaternary structure, the glycine cleavage system is composed of four proteins: P, T, L and H. In this organism, the P 'protein' is a heterodimer of two subunits. Requires pyridoxal 5'-phosphate as cofactor.

It catalyses the reaction N(6)-[(R)-lipoyl]-L-lysyl-[glycine-cleavage complex H protein] + glycine + H(+) = N(6)-[(R)-S(8)-aminomethyldihydrolipoyl]-L-lysyl-[glycine-cleavage complex H protein] + CO2. In terms of biological role, the glycine cleavage system catalyzes the degradation of glycine. The P protein binds the alpha-amino group of glycine through its pyridoxal phosphate cofactor; CO(2) is released and the remaining methylamine moiety is then transferred to the lipoamide cofactor of the H protein. This is Probable glycine dehydrogenase (decarboxylating) subunit 2 from Bacillus cytotoxicus (strain DSM 22905 / CIP 110041 / 391-98 / NVH 391-98).